A 202-amino-acid polypeptide reads, in one-letter code: Helix-loop-helix protein 10 (202 aa).

Disordered stretches follow at residues 1–26 and 83–112; these read MESSSMTTHQEEPLDLSTGNHGNSEL and QNKSEVNDENESTPSPTQNSRRRTSTGKID. The segment covering 17-26 has biased composition (polar residues); the sequence is STGNHGNSEL. The basic motif stretch occupies residues 121 to 134; it reads TRRYEANARERNRV. Residues 121-172 enclose the bHLH domain; it reads TRRYEANARERNRVQQLSKMFDQLRVCLPIEDDAKISKLATLKVASSYIGYL. Residues 135-172 form a helix-loop-helix motif region; it reads QQLSKMFDQLRVCLPIEDDAKISKLATLKVASSYIGYL.

Heterodimer with hlh-2. Expressed in intestine, neurons in head, body and tail, and in body hypodermis, and vulva. Expressed in neurons in the male-specific genital sensilla (simple sense organs) known as rays.

It localises to the nucleus. Its subcellular location is the cytoplasm. Probable transcription factor which binds the E box motif 5'-CA[TC][AG]TG-3'. The protein is Helix-loop-helix protein 10 of Caenorhabditis elegans.